The sequence spans 88 residues: Small ribosomal subunit protein uS15 (88 aa).

It belongs to the universal ribosomal protein uS15 family. As to quaternary structure, part of the 30S ribosomal subunit. Forms a bridge to the 50S subunit in the 70S ribosome, contacting the 23S rRNA.

In terms of biological role, one of the primary rRNA binding proteins, it binds directly to 16S rRNA where it helps nucleate assembly of the platform of the 30S subunit by binding and bridging several RNA helices of the 16S rRNA. Functionally, forms an intersubunit bridge (bridge B4) with the 23S rRNA of the 50S subunit in the ribosome. This is Small ribosomal subunit protein uS15 from Syntrophus aciditrophicus (strain SB).